Reading from the N-terminus, the 157-residue chain is Arginine repressor (157 aa).

It belongs to the ArgR family.

It is found in the cytoplasm. The protein operates within amino-acid biosynthesis; L-arginine biosynthesis [regulation]. Functionally, regulates arginine biosynthesis genes. This is Arginine repressor from Deinococcus radiodurans (strain ATCC 13939 / DSM 20539 / JCM 16871 / CCUG 27074 / LMG 4051 / NBRC 15346 / NCIMB 9279 / VKM B-1422 / R1).